The sequence spans 389 residues: Na(+)/H(+) antiporter NhaA 1 (389 aa).

12 helical membrane passes run 12–32 (VLNE…ALLV), 62–82 (FLLW…GLEL), 97–117 (IVLP…LFVL), 128–148 (GWAI…MMCG), 157–177 (IFLL…IAIF), 184–204 (IVAF…NILG), 220–240 (ISVL…AFFI), 260–280 (FWLA…VNLS), 282–302 (IDIG…LFVG), 305–325 (AGVF…LPQG), 331–351 (LYGV…IDGL), and 365–385 (LAIL…LKFF).

This sequence belongs to the NhaA Na(+)/H(+) (TC 2.A.33) antiporter family.

It localises to the cell inner membrane. It catalyses the reaction Na(+)(in) + 2 H(+)(out) = Na(+)(out) + 2 H(+)(in). Its function is as follows. Na(+)/H(+) antiporter that extrudes sodium in exchange for external protons. This chain is Na(+)/H(+) antiporter NhaA 1, found in Campylobacter jejuni subsp. jejuni serotype O:23/36 (strain 81-176).